A 120-amino-acid polypeptide reads, in one-letter code: Large ribosomal subunit protein uL18 (120 aa).

Belongs to the universal ribosomal protein uL18 family. As to quaternary structure, part of the 50S ribosomal subunit; part of the 5S rRNA/L5/L18/L25 subcomplex. Contacts the 5S and 23S rRNAs.

Functionally, this is one of the proteins that bind and probably mediate the attachment of the 5S RNA into the large ribosomal subunit, where it forms part of the central protuberance. This is Large ribosomal subunit protein uL18 from Bacillus cereus (strain ATCC 10987 / NRS 248).